We begin with the raw amino-acid sequence, 513 residues long: Microtubule-associated protein 70-5 (513 aa).

Disordered regions lie at residues 1-20 (MTAA…SQLK), 60-81 (KLGA…LEEE), 347-367 (FLTS…GSVT), and 393-413 (ANGL…EDGN). Positions 9-18 (VSDTSSLQSQ) are enriched in polar residues. A coiled-coil region spans residues 10 to 322 (SDTSSLQSQL…LKLRLKTIED (313 aa)). Positions 60–80 (KLGATENQVDQKELERKKLEE) are enriched in basic and acidic residues. A required for targeting to microtubules region spans residues 190–400 (FLEKINRQKV…ITANGLTDQH (211 aa)). Residues 426–501 (DRLQKEVIAL…EESKLCRKAK (76 aa)) are a coiled coil.

Belongs to the MAP70 family. Interacts with MAP70.1 and itself.

The protein resides in the cytoplasm. Its subcellular location is the cytoskeleton. Plant-specific protein that interact with microtubules and regulates microtubule dynamics. May play a role in anisotropic cell expansion and organ growth. In association with MAP70.1, is essential for the normal banding pattern of secondary cell wall and for the proper development of xylem tracheary elements and wood formation. This chain is Microtubule-associated protein 70-5 (MAP70.5), found in Arabidopsis thaliana (Mouse-ear cress).